The primary structure comprises 287 residues: MAGAKEIRSKIASVQNTQKITKAMEMVAASKMRKSQERMAASRPYADTMRKVIGHLANGNLEYKHPYLEERDVKRVGYLVVSTDRGLCGGLNINLFKKLLAEMKAWSDKGVQCDLAMIGSKGVSFFNAVGGNVVAQVTGMGDNPSLSELIGPVKVMLQAYDEGRLDKLYVVSNKFINTMSQVPTITQLLPLPASEDADLKRKSWDYLYEPDPKALLDTLLRRYVESQVYQGVVENLASEQAARMVAMKAATDNGGSLIKELQLVYNKARQASITQELTEIVGGASAV.

Belongs to the ATPase gamma chain family. F-type ATPases have 2 components, CF(1) - the catalytic core - and CF(0) - the membrane proton channel. CF(1) has five subunits: alpha(3), beta(3), gamma(1), delta(1), epsilon(1). CF(0) has three main subunits: a, b and c.

The protein localises to the cell inner membrane. Functionally, produces ATP from ADP in the presence of a proton gradient across the membrane. The gamma chain is believed to be important in regulating ATPase activity and the flow of protons through the CF(0) complex. This chain is ATP synthase gamma chain, found in Klebsiella pneumoniae (strain 342).